The sequence spans 59 residues: Large ribosomal subunit protein bL32 (59 aa).

Basic residues predominate over residues 1–16; it reads MAVPKRKTSPSKRGMR. A disordered region spans residues 1–41; the sequence is MAVPKRKTSPSKRGMRRSADALKAPTYIEDKNSGELRRPHH. Basic and acidic residues predominate over residues 28-41; the sequence is IEDKNSGELRRPHH.

It belongs to the bacterial ribosomal protein bL32 family.

The protein is Large ribosomal subunit protein bL32 of Bartonella henselae (strain ATCC 49882 / DSM 28221 / CCUG 30454 / Houston 1) (Rochalimaea henselae).